The chain runs to 250 residues: 5-oxoprolinase subunit A (250 aa).

The protein belongs to the LamB/PxpA family. In terms of assembly, forms a complex composed of PxpA, PxpB and PxpC.

The enzyme catalyses 5-oxo-L-proline + ATP + 2 H2O = L-glutamate + ADP + phosphate + H(+). Its function is as follows. Catalyzes the cleavage of 5-oxoproline to form L-glutamate coupled to the hydrolysis of ATP to ADP and inorganic phosphate. The polypeptide is 5-oxoprolinase subunit A (Paraburkholderia phymatum (strain DSM 17167 / CIP 108236 / LMG 21445 / STM815) (Burkholderia phymatum)).